We begin with the raw amino-acid sequence, 169 residues long: Benzoate 1,2-dioxygenase subunit beta (169 aa).

This sequence belongs to the bacterial ring-hydroxylating dioxygenase beta subunit family. As to quaternary structure, this dioxygenase system consists of three proteins: the two subunits of the hydroxylase (BenA and BenB), and an electron transfer component (BenC).

It carries out the reaction benzoate + NADH + O2 + H(+) = (1R,6S)-1,6-dihydroxycyclohexa-2,4-diene-1-carboxylate + NAD(+). Its pathway is aromatic compound metabolism; benzoate degradation via hydroxylation; catechol from benzoate: step 1/2. Degradation of benzoate to 2-hydro-1,2-dihydroxybenzoate (DHB). The beta subunit may be responsible for the substrate specificity of the enzyme. The protein is Benzoate 1,2-dioxygenase subunit beta (benB) of Acinetobacter baylyi (strain ATCC 33305 / BD413 / ADP1).